The following is a 425-amino-acid chain: Cysteate synthase (425 aa).

The residue at position 106 (K106) is an N6-(pyridoxal phosphate)lysine. Pyridoxal 5'-phosphate-binding residues include N132 and T382.

It belongs to the threonine synthase family. Cysteate synthase subfamily. Homotrimer. The cofactor is pyridoxal 5'-phosphate.

It carries out the reaction O-phospho-L-serine + sulfite + H(+) = L-cysteate + phosphate. Its pathway is cofactor biosynthesis; coenzyme M biosynthesis. Its function is as follows. Specifically catalyzes the beta-elimination of phosphate from L-phosphoserine and the beta-addition of sulfite to the dehydroalanine intermediate to produce L-cysteate. The sequence is that of Cysteate synthase from Methanosphaerula palustris (strain ATCC BAA-1556 / DSM 19958 / E1-9c).